The primary structure comprises 338 residues: NADPH dehydrogenase (338 aa).

Residue 22–25 (SPMC) participates in FMN binding. Substrate is bound at residue tyrosine 27. Residues alanine 59 and glutamine 101 each contribute to the FMN site. A substrate-binding site is contributed by 163–166 (HAAH). Residues arginine 214 and 306–307 (GR) contribute to the FMN site.

This sequence belongs to the NADH:flavin oxidoreductase/NADH oxidase family. NamA subfamily. In terms of assembly, homotetramer. FMN is required as a cofactor.

It catalyses the reaction A + NADPH + H(+) = AH2 + NADP(+). Catalyzes the reduction of the double bond of an array of alpha,beta-unsaturated aldehydes and ketones. It also reduces the nitro group of nitroester and nitroaromatic compounds. It could have a role in detoxification processes. The sequence is that of NADPH dehydrogenase from Listeria welshimeri serovar 6b (strain ATCC 35897 / DSM 20650 / CCUG 15529 / CIP 8149 / NCTC 11857 / SLCC 5334 / V8).